We begin with the raw amino-acid sequence, 124 residues long: MATINQLVRKPRVKKVVKSNVPALESCPQKRGVCTRVYTTTPKKPNSALRKVCRIRLTNGFEVTSYIGGEGHNLQEHSVVLIRGGRVKDLPGVRYHTVRGALDCAGVKDRKQSRSKYGVKRPKA.

D89 is modified (3-methylthioaspartic acid).

Belongs to the universal ribosomal protein uS12 family. Part of the 30S ribosomal subunit. Contacts proteins S8 and S17. May interact with IF1 in the 30S initiation complex.

Functionally, with S4 and S5 plays an important role in translational accuracy. In terms of biological role, interacts with and stabilizes bases of the 16S rRNA that are involved in tRNA selection in the A site and with the mRNA backbone. Located at the interface of the 30S and 50S subunits, it traverses the body of the 30S subunit contacting proteins on the other side and probably holding the rRNA structure together. The combined cluster of proteins S8, S12 and S17 appears to hold together the shoulder and platform of the 30S subunit. The polypeptide is Small ribosomal subunit protein uS12 (Histophilus somni (strain 129Pt) (Haemophilus somnus)).